A 251-amino-acid chain; its full sequence is uncharacterized protein (251 aa).

The Response regulatory domain maps to 3 to 118 (KVVICDDERI…QLEHILDILV (116 aa)). Asp55 is modified (4-aspartylphosphate). Residues 152 to 249 (NQILSQIKQH…HMSPSDYNKL (98 aa)) enclose the HTH araC/xylS-type domain. DNA-binding regions (H-T-H motif) lie at residues 169-190 (LDLI…KEHV) and 216-239 (HYEI…KKYL).

Phosphorylated by SE_0166.

The protein resides in the cytoplasm. Functionally, probable member of the two-component regulatory system SE_0166/SE_0165. This is an uncharacterized protein from Staphylococcus epidermidis (strain ATCC 12228 / FDA PCI 1200).